A 241-amino-acid polypeptide reads, in one-letter code: Ribonuclease 3 (241 aa).

Residues 8–137 (LTLLKNRLGI…LLGAVYLDQG (130 aa)) form the RNase III domain. Residue Glu50 participates in Mg(2+) binding. Residue Asp54 is part of the active site. Mg(2+) contacts are provided by Asp123 and Glu126. Glu126 is an active-site residue. The 70-residue stretch at 164–233 (DYKTELQELV…AKKALMKSDL (70 aa)) folds into the DRBM domain. The disordered stretch occupies residues 214 to 241 (RSKKEAEQQAAKKALMKSDLGSACNHKK).

It belongs to the ribonuclease III family. Homodimer. Requires Mg(2+) as cofactor.

Its subcellular location is the cytoplasm. The enzyme catalyses Endonucleolytic cleavage to 5'-phosphomonoester.. Its function is as follows. Digests double-stranded RNA. Involved in the processing of primary rRNA transcript to yield the immediate precursors to the large and small rRNAs (23S and 16S). Processes some mRNAs, and tRNAs when they are encoded in the rRNA operon. Processes pre-crRNA and tracrRNA of type II CRISPR loci if present in the organism. The polypeptide is Ribonuclease 3 (Pelotomaculum thermopropionicum (strain DSM 13744 / JCM 10971 / SI)).